A 500-amino-acid chain; its full sequence is Glycerol kinase (500 aa).

Residue T13 coordinates ADP. The ATP site is built by T13, T14, and S15. Residue T13 participates in sn-glycerol 3-phosphate binding. An ADP-binding site is contributed by R17. Sn-glycerol 3-phosphate contacts are provided by R83, E84, Y136, and D246. Glycerol contacts are provided by R83, E84, Y136, D246, and Q247. 2 residues coordinate ADP: T268 and G311. 4 residues coordinate ATP: T268, G311, Q315, and G412. G412 and N416 together coordinate ADP.

Belongs to the FGGY kinase family.

The catalysed reaction is glycerol + ATP = sn-glycerol 3-phosphate + ADP + H(+). It participates in polyol metabolism; glycerol degradation via glycerol kinase pathway; sn-glycerol 3-phosphate from glycerol: step 1/1. Inhibited by fructose 1,6-bisphosphate (FBP). Key enzyme in the regulation of glycerol uptake and metabolism. Catalyzes the phosphorylation of glycerol to yield sn-glycerol 3-phosphate. The protein is Glycerol kinase of Francisella tularensis subsp. novicida (strain U112).